Here is a 102-residue protein sequence, read N- to C-terminus: YcgL domain-containing protein MS1047 (102 aa).

Residues 1–85 (MLCAIYKSKK…KQESLFEQFK (85 aa)) form the YcgL domain.

In Mannheimia succiniciproducens (strain KCTC 0769BP / MBEL55E), this protein is YcgL domain-containing protein MS1047.